A 583-amino-acid polypeptide reads, in one-letter code: Arginine--tRNA ligase (583 aa).

Residues Ala131–His141 carry the 'HIGH' region motif.

Belongs to the class-I aminoacyl-tRNA synthetase family. Monomer.

It is found in the cytoplasm. The catalysed reaction is tRNA(Arg) + L-arginine + ATP = L-arginyl-tRNA(Arg) + AMP + diphosphate. The chain is Arginine--tRNA ligase from Parvibaculum lavamentivorans (strain DS-1 / DSM 13023 / NCIMB 13966).